The primary structure comprises 456 residues: UDP-glycosyltransferase 74D1 (456 aa).

UDP-alpha-D-glucose is bound by residues Ser-279, 332-334 (SPQ), 349-357 (HCGWNSTLE), and 371-374 (YSDQ).

This sequence belongs to the UDP-glycosyltransferase family. As to expression, expressed in leaves.

Glucosyltransferase that glucosylates jasmonate (JA) and JA derivatives. Also active on indole-3-acetic acid (IAA), 4-coumrate, cinnamate and caffeate. The protein is UDP-glycosyltransferase 74D1 (UGT74D1) of Arabidopsis thaliana (Mouse-ear cress).